Here is a 179-residue protein sequence, read N- to C-terminus: Natural killer cells antigen CD94 (179 aa).

The Cytoplasmic segment spans residues 1 to 10 (MAVFKTTLWR). Residues 11 to 31 (LISGTLGIICLSLMATLGILL) traverse the membrane as a helical; Signal-anchor for type II membrane protein segment. Topologically, residues 32-179 (KNSFTKLSVE…NRYICKQQLI (148 aa)) are extracellular. 2 cysteine pairs are disulfide-bonded: Cys58–Cys70 and Cys61–Cys72. The region spanning 68-175 (YRCNCYFISS…CETKNRYICK (108 aa)) is the C-type lectin domain. 2 N-linked (GlcNAc...) asparagine glycosylation sites follow: Asn83 and Asn132. 2 disulfides stabilise this stretch: Cys89/Cys174 and Cys152/Cys166.

In terms of assembly, can form disulfide-bonded heterodimer with NKG2 family members KLRC1 and KLRC2. KLRD1-KLRC1 heterodimer interacts with peptide-bound MHC-E-B2M heterotrimeric complex. KLRD1 plays a prominent role in directly interacting with MHC-E. KLRD1-KLRC1 interacts with much higher affinity with peptide-bound MHC-E-B2M than KLRD1-KLRC2. Interacts with the adapter protein TYROBP/DAP12; this interaction is required for cell surface expression and cell activation. Natural killer cells.

The protein resides in the cell membrane. In terms of biological role, immune receptor involved in self-nonself discrimination. In complex with KLRC1 or KLRC2 on cytotoxic and regulatory lymphocyte subsets, recognizes non-classical major histocompatibility (MHC) class Ib molecule MHC-E loaded with self-peptides derived from the signal sequence of classical MHC class Ia and non-classical MHC class Ib molecules. Enables cytotoxic cells to monitor the expression of MHC class I molecules in healthy cells and to tolerate self. Primarily functions as a ligand binding subunit as it lacks the capacity to signal. Functionally, KLRD1-KLRC1 acts as an immune inhibitory receptor. Key inhibitory receptor on natural killer (NK) cells that regulates their activation and effector functions. Dominantly counteracts T cell receptor signaling on a subset of memory/effector CD8-positive T cells as part of an antigen-driven response to avoid autoimmunity. On intraepithelial CD8-positive gamma-delta regulatory T cells triggers TGFB1 secretion, which in turn limits the cytotoxic programming of intraepithelial CD8-positive alpha-beta T cells, distinguishing harmless from pathogenic antigens. In MHC-E-rich tumor microenvironment, acts as an immune inhibitory checkpoint and may contribute to progressive loss of effector functions of NK cells and tumor-specific T cells, a state known as cell exhaustion. Upon MHC-E-peptide binding, transmits intracellular signals through KLRC1 immunoreceptor tyrosine-based inhibition motifs (ITIMs) by recruiting INPP5D/SHIP-1 and INPPL1/SHIP-2 tyrosine phosphatases to ITIMs, and ultimately opposing signals transmitted by activating receptors through dephosphorylation of proximal signaling molecules. KLRD1-KLRC2 acts as an immune activating receptor. On cytotoxic lymphocyte subsets recognizes MHC-E loaded with signal sequence-derived peptides from non-classical MHC class Ib MHC-G molecules, likely playing a role in the generation and effector functions of adaptive NK cells and in maternal-fetal tolerance during pregnancy. Regulates the effector functions of terminally differentiated cytotoxic lymphocyte subsets, and in particular may play a role in adaptive NK cell response to viral infection. Upon MHC-E-peptide binding, transmits intracellular signals via the adapter protein TYROBP/DAP12, triggering the phosphorylation of proximal signaling molecules and cell activation. The protein is Natural killer cells antigen CD94 (KLRD1) of Macaca mulatta (Rhesus macaque).